Reading from the N-terminus, the 308-residue chain is uncharacterized protein (308 aa).

Residues Leu50, Asp90, Asn117, Tyr182, Lys186, Ile222, and Thr224 each coordinate NADP(+). Catalysis depends on Tyr182, which acts as the Proton acceptor. The Lowers pKa of active site Tyr role is filled by Lys186.

It belongs to the short-chain dehydrogenases/reductases (SDR) family.

This is an uncharacterized protein from Saccharomyces cerevisiae (strain ATCC 204508 / S288c) (Baker's yeast).